The primary structure comprises 337 residues: 4-hydroxythreonine-4-phosphate dehydrogenase (337 aa).

Histidine 138 and threonine 139 together coordinate substrate. Histidine 168, histidine 212, and histidine 267 together coordinate a divalent metal cation. Substrate is bound by residues lysine 275, asparagine 284, and arginine 293.

It belongs to the PdxA family. In terms of assembly, homodimer. Zn(2+) serves as cofactor. Mg(2+) is required as a cofactor. Requires Co(2+) as cofactor.

It localises to the cytoplasm. It carries out the reaction 4-(phosphooxy)-L-threonine + NAD(+) = 3-amino-2-oxopropyl phosphate + CO2 + NADH. It participates in cofactor biosynthesis; pyridoxine 5'-phosphate biosynthesis; pyridoxine 5'-phosphate from D-erythrose 4-phosphate: step 4/5. Its function is as follows. Catalyzes the NAD(P)-dependent oxidation of 4-(phosphooxy)-L-threonine (HTP) into 2-amino-3-oxo-4-(phosphooxy)butyric acid which spontaneously decarboxylates to form 3-amino-2-oxopropyl phosphate (AHAP). This Beijerinckia indica subsp. indica (strain ATCC 9039 / DSM 1715 / NCIMB 8712) protein is 4-hydroxythreonine-4-phosphate dehydrogenase.